A 508-amino-acid polypeptide reads, in one-letter code: 25-hydroxyvitamin D-1 alpha hydroxylase, mitochondrial (508 aa).

Heme is bound at residue Cys455.

Belongs to the cytochrome P450 family. The cofactor is heme. As to expression, kidney.

It is found in the mitochondrion membrane. The enzyme catalyses calcidiol + 2 reduced [adrenodoxin] + O2 + 2 H(+) = calcitriol + 2 oxidized [adrenodoxin] + H2O. It catalyses the reaction secalciferol + 2 reduced [adrenodoxin] + O2 + 2 H(+) = calcitetrol + 2 oxidized [adrenodoxin] + H2O. The catalysed reaction is 25-hydroxy-24-oxocalciol + 2 reduced [adrenodoxin] + O2 + 2 H(+) = (1S)-1,25-dihydroxy-24-oxocalciol + 2 oxidized [adrenodoxin] + H2O. It carries out the reaction 25-hydroxyvitamin D2 + 2 reduced [adrenodoxin] + O2 + 2 H(+) = 1alpha,25-dihydroxyvitamin D2 + 2 oxidized [adrenodoxin] + H2O. It participates in hormone biosynthesis; vitamin D biosynthesis. Activated by cardiolipin and dioleoyl phosphatidylethanolamine (DOPE), phospholipids found in the inner mitochondrial membrane. Inhibited by high substrate concentration. Functionally, a cytochrome P450 monooxygenase involved in vitamin D metabolism and in calcium and phosphorus homeostasis. Catalyzes the rate-limiting step in the activation of vitamin D in the kidney, namely the hydroxylation of 25-hydroxyvitamin D3/calcidiol at the C1alpha-position to form the hormonally active form of vitamin D3, 1alpha,25-dihydroxyvitamin D3/calcitriol that acts via the vitamin D receptor (VDR). Has 1alpha-hydroxylase activity on vitamin D intermediates of the CYP24A1-mediated inactivation pathway. Converts 24R,25-dihydroxyvitamin D3/secalciferol to 1-alpha,24,25-trihydroxyvitamin D3, an active ligand of VDR. Also active on 25-hydroxyvitamin D2. Mechanistically, uses molecular oxygen inserting one oxygen atom into a substrate, and reducing the second into a water molecule, with two electrons provided by NADPH via FDXR/adrenodoxin reductase and FDX1/adrenodoxin. The polypeptide is 25-hydroxyvitamin D-1 alpha hydroxylase, mitochondrial (CYP27B1) (Homo sapiens (Human)).